The sequence spans 881 residues: Beta-mannosidase (881 aa).

An N-terminal signal peptide occupies residues 1–18 (MHLHLLFLLALCGAGCMA). N-linked (GlcNAc...) asparagine glycans are attached at residues Asn-35, Asn-77, Asn-89, and Asn-113. Residues Cys-167 and Cys-176 are joined by a disulfide bond. 190 to 192 (WDW) is a substrate binding site. Asn-226, Asn-297, and Asn-302 each carry an N-linked (GlcNAc...) asparagine glycan. Substrate is bound at residue Asn-456. Glu-457 serves as the catalytic Proton donor. Intrachain disulfides connect Cys-540/Cys-629, Cys-732/Cys-761, and Cys-764/Cys-769. The active-site Nucleophile is Glu-554. N-linked (GlcNAc...) asparagine glycosylation occurs at Asn-803.

The protein belongs to the glycosyl hydrolase 2 family. In terms of assembly, monomer.

The protein resides in the lysosome. It carries out the reaction Hydrolysis of terminal, non-reducing beta-D-mannose residues in beta-D-mannosides.. It functions in the pathway glycan metabolism; N-glycan degradation. Its function is as follows. Exoglycosidase that cleaves the single beta-linked mannose residue from the non-reducing end of all N-linked glycoprotein oligosaccharides. This chain is Beta-mannosidase, found in Rattus norvegicus (Rat).